Consider the following 243-residue polypeptide: Small ribosomal subunit protein uS3 (243 aa).

The region spanning 39 to 110 (IRKFIHKKYG…QVRINVVEVE (72 aa)) is the KH type-2 domain. The disordered stretch occupies residues 217 to 243 (QQLPVGATPRRRAGRRPQQFEDRSNEG). Residues 234–243 (QQFEDRSNEG) show a composition bias toward basic and acidic residues.

It belongs to the universal ribosomal protein uS3 family. As to quaternary structure, part of the 30S ribosomal subunit. Forms a tight complex with proteins S10 and S14.

Its function is as follows. Binds the lower part of the 30S subunit head. Binds mRNA in the 70S ribosome, positioning it for translation. This Synechococcus sp. (strain WH7803) protein is Small ribosomal subunit protein uS3.